The chain runs to 278 residues: tRNA uridine(34) hydroxylase (278 aa).

The region spanning 122-216 (QDPDVVVIDT…YLETIAPEES (95 aa)) is the Rhodanese domain. C176 acts as the Cysteine persulfide intermediate in catalysis.

Belongs to the TrhO family.

The enzyme catalyses uridine(34) in tRNA + AH2 + O2 = 5-hydroxyuridine(34) in tRNA + A + H2O. In terms of biological role, catalyzes oxygen-dependent 5-hydroxyuridine (ho5U) modification at position 34 in tRNAs. The chain is tRNA uridine(34) hydroxylase from Synechocystis sp. (strain ATCC 27184 / PCC 6803 / Kazusa).